Reading from the N-terminus, the 304-residue chain is MNLEILQKKKEECRTWKNVEPWFLQLKEACKIEKSNLKIDYGDWFSIGNRADLGDEEYEIIVQTAKKLIPWRKGPFKIFDLEIDSEWQSNIKYNLIRPYFNLKDKVVADIGCNNGYYMFRMLEDCPKRLIGFDPSPLTLHQFEFVNHFVKSDIVYEMLGVEHLEFYNHKFDFIFMLGVLYHRPDPVGTLKSLARGLNSKGEILIDTFMIDGEEEICLTPNKRYSKIPNIYFIPTIPALKNWLERAGFENIEVLATTITTSQEQRKTPWSFDESLEDFLDPNDSSKTVEGYPAPKRVYVKARKIM.

Residues Lys-73, Trp-87, Lys-92, Gly-111, 133–135 (DPS), 160–161 (VE), Tyr-180, and Arg-295 each bind carboxy-S-adenosyl-L-methionine.

The protein belongs to the class I-like SAM-binding methyltransferase superfamily. CmoB family. As to quaternary structure, homotetramer.

The catalysed reaction is carboxy-S-adenosyl-L-methionine + 5-hydroxyuridine(34) in tRNA = 5-carboxymethoxyuridine(34) in tRNA + S-adenosyl-L-homocysteine + H(+). Functionally, catalyzes carboxymethyl transfer from carboxy-S-adenosyl-L-methionine (Cx-SAM) to 5-hydroxyuridine (ho5U) to form 5-carboxymethoxyuridine (cmo5U) at position 34 in tRNAs. The protein is tRNA U34 carboxymethyltransferase of Aliarcobacter butzleri (strain RM4018) (Arcobacter butzleri).